Here is a 376-residue protein sequence, read N- to C-terminus: Polygalacturonase (376 aa).

A signal peptide spans 1–20; it reads MASSLKLGLIALLGATAVNA. A disulfide bridge connects residues Cys-39 and Cys-57. Residues 170–208 form a PbH1 1 repeat; sequence AKELTLSGITVDTADGDSNGGHNTDAFDVGSSNGVYITS. Asp-215 functions as the Proton donor in the catalytic mechanism. The cysteines at positions 217 and 233 are disulfide-linked. PbH1 repeat units lie at residues 223–243, 252–273, 281–303, and 315–360; these read GTNV…SIGS, VDGV…RIKT, VQGV…VIEQ, and TSGV…SITG. Residue His-237 is part of the active site. Disulfide bonds link Cys-343–Cys-348 and Cys-367–Cys-376.

It belongs to the glycosyl hydrolase 28 family.

Its subcellular location is the secreted. The catalysed reaction is (1,4-alpha-D-galacturonosyl)n+m + H2O = (1,4-alpha-D-galacturonosyl)n + (1,4-alpha-D-galacturonosyl)m.. The polypeptide is Polygalacturonase (PGG1) (Penicillium griseoroseum).